The following is a 238-amino-acid chain: Triosephosphate isomerase (238 aa).

7 to 9 (NFK) provides a ligand contact to substrate. Histidine 91 functions as the Electrophile in the catalytic mechanism. Residue glutamate 158 is the Proton acceptor of the active site. Substrate contacts are provided by glycine 164 and serine 200.

It belongs to the triosephosphate isomerase family. Homodimer.

Its subcellular location is the cytoplasm. The enzyme catalyses D-glyceraldehyde 3-phosphate = dihydroxyacetone phosphate. Its pathway is carbohydrate biosynthesis; gluconeogenesis. It functions in the pathway carbohydrate degradation; glycolysis; D-glyceraldehyde 3-phosphate from glycerone phosphate: step 1/1. Its function is as follows. Involved in the gluconeogenesis. Catalyzes stereospecifically the conversion of dihydroxyacetone phosphate (DHAP) to D-glyceraldehyde-3-phosphate (G3P). The protein is Triosephosphate isomerase of Ureaplasma parvum serovar 3 (strain ATCC 27815 / 27 / NCTC 11736).